The sequence spans 223 residues: Cytochrome c biogenesis ATP-binding export protein CcmA (223 aa).

The 203-residue stretch at 20–222 (LAAHALTYSR…PTRLLHLKKA (203 aa)) folds into the ABC transporter domain. Residue 52–59 (GPNGIGKT) coordinates ATP.

Belongs to the ABC transporter superfamily. CcmA exporter (TC 3.A.1.107) family. As to quaternary structure, the complex is composed of two ATP-binding proteins (CcmA) and two transmembrane proteins (CcmB).

It localises to the cell inner membrane. It carries out the reaction heme b(in) + ATP + H2O = heme b(out) + ADP + phosphate + H(+). In terms of biological role, part of the ABC transporter complex CcmAB involved in the biogenesis of c-type cytochromes; once thought to export heme, this seems not to be the case, but its exact role is uncertain. Responsible for energy coupling to the transport system. This Xylella fastidiosa (strain 9a5c) protein is Cytochrome c biogenesis ATP-binding export protein CcmA.